Consider the following 323-residue polypeptide: Beta-ketoacyl-[acyl-carrier-protein] synthase III (323 aa).

Residues cysteine 113 and histidine 250 contribute to the active site. The segment at 251–255 is ACP-binding; sequence QANLR. The active site involves asparagine 280.

The protein belongs to the thiolase-like superfamily. FabH family. Homodimer.

It localises to the cytoplasm. The catalysed reaction is malonyl-[ACP] + acetyl-CoA + H(+) = 3-oxobutanoyl-[ACP] + CO2 + CoA. The protein operates within lipid metabolism; fatty acid biosynthesis. Catalyzes the condensation reaction of fatty acid synthesis by the addition to an acyl acceptor of two carbons from malonyl-ACP. Catalyzes the first condensation reaction which initiates fatty acid synthesis and may therefore play a role in governing the total rate of fatty acid production. Possesses both acetoacetyl-ACP synthase and acetyl transacylase activities. Its substrate specificity determines the biosynthesis of branched-chain and/or straight-chain of fatty acids. This chain is Beta-ketoacyl-[acyl-carrier-protein] synthase III, found in Paracoccus denitrificans (strain Pd 1222).